Consider the following 205-residue polypeptide: ATP phosphoribosyltransferase (205 aa).

Belongs to the ATP phosphoribosyltransferase family. Short subfamily. As to quaternary structure, heteromultimer composed of HisG and HisZ subunits.

Its subcellular location is the cytoplasm. It catalyses the reaction 1-(5-phospho-beta-D-ribosyl)-ATP + diphosphate = 5-phospho-alpha-D-ribose 1-diphosphate + ATP. It participates in amino-acid biosynthesis; L-histidine biosynthesis; L-histidine from 5-phospho-alpha-D-ribose 1-diphosphate: step 1/9. In terms of biological role, catalyzes the condensation of ATP and 5-phosphoribose 1-diphosphate to form N'-(5'-phosphoribosyl)-ATP (PR-ATP). Has a crucial role in the pathway because the rate of histidine biosynthesis seems to be controlled primarily by regulation of HisG enzymatic activity. The chain is ATP phosphoribosyltransferase from Vesicomyosocius okutanii subsp. Calyptogena okutanii (strain HA).